A 114-amino-acid polypeptide reads, in one-letter code: Adapter SH3BGRL (114 aa).

Residues 13-50 (STAIKKKQQDVLGFLEANKIGFEEKDIAANEENRKWMR) form a required for interaction with HER2 region. The required for interaction with PFN1, HER2, and ATG12 stretch occupies residues 54–71 (PENSRPATGYPLPPQIFN). Residues 61–67 (TGYPLPP) carry the SH3-binding motif.

It belongs to the SH3BGR family. As to quaternary structure, monomer. Interacts with PFN1/Profilin-1. Interacts with ERBB2. Interacts with ATG12. Interacts with BECN1. Interacts with translating ribosomes. In terms of tissue distribution, ubiquitous.

It is found in the cytoplasm. The protein resides in the cytosol. Its subcellular location is the cell membrane. Appears to function as an adapter protein that bridges proteins together or proteins with mRNAs. May function as a ubiquitin ligase-substrate adapter. Additionally, associates with translating cytoplasmic ribosomes and may promote the expression of specific mRNAs. This is Adapter SH3BGRL from Homo sapiens (Human).